The primary structure comprises 357 residues: Putative DNA directed RNA polymerase subunit R470 (357 aa).

It belongs to the archaeal Rpo11/eukaryotic RPB11/RPC19 RNA polymerase subunit family.

It localises to the virion. It catalyses the reaction RNA(n) + a ribonucleoside 5'-triphosphate = RNA(n+1) + diphosphate. The protein is Putative DNA directed RNA polymerase subunit R470 of Acanthamoeba polyphaga mimivirus (APMV).